A 516-amino-acid chain; its full sequence is Nondiscriminating glutamyl-tRNA synthetase EARS2, mitochondrial (516 aa).

Residues M1–F39 constitute a mitochondrion transit peptide. Position 38–40 (R38–A40) interacts with L-glutamate. Positions P43–G51 match the 'HIGH' region motif. H48 is an ATP binding site. L-glutamate-binding positions include E74, Y226 to N230, and R244. ATP-binding positions include E247 and K282–R286. Positions K282 to R286 match the 'KMSKS' region motif.

It belongs to the class-I aminoacyl-tRNA synthetase family. Glutamate--tRNA ligase type 1 subfamily.

The protein resides in the mitochondrion matrix. The enzyme catalyses tRNA(Glx) + L-glutamate + ATP = L-glutamyl-tRNA(Glx) + AMP + diphosphate. The catalysed reaction is tRNA(Glu) + L-glutamate + ATP = L-glutamyl-tRNA(Glu) + AMP + diphosphate. It catalyses the reaction tRNA(Gln) + L-glutamate + ATP = L-glutamyl-tRNA(Gln) + AMP + diphosphate. Its function is as follows. Non-discriminating glutamyl-tRNA synthetase that catalyzes aminoacylation of both mitochondrial tRNA(Glu) and tRNA(Gln) and participates in RNA aminoacylation for mitochondrial protein translation. Attachs glutamate to tRNA(Glu) or tRNA(Gln) in a two-step reaction: glutamate is first activated by ATP to form Glu-AMP and then transferred to the acceptor end of tRNA(Glu) or tRNA(Gln). This is Nondiscriminating glutamyl-tRNA synthetase EARS2, mitochondrial from Xenopus tropicalis (Western clawed frog).